The primary structure comprises 202 residues: Small ribosomal subunit protein uS4 (202 aa).

A disordered region spans residues 17–42; the sequence is ELPGLSRKTPRRAYPPGQHGQARKKR. The region spanning 90 to 152 is the S4 RNA-binding domain; that stretch reads MRLDNTIFRL…DASRKLIETH (63 aa).

This sequence belongs to the universal ribosomal protein uS4 family. Part of the 30S ribosomal subunit. Contacts protein S5. The interaction surface between S4 and S5 is involved in control of translational fidelity.

In terms of biological role, one of the primary rRNA binding proteins, it binds directly to 16S rRNA where it nucleates assembly of the body of the 30S subunit. With S5 and S12 plays an important role in translational accuracy. The protein is Small ribosomal subunit protein uS4 of Acaryochloris marina (strain MBIC 11017).